We begin with the raw amino-acid sequence, 63 residues long: Jingdongin-1-MT1 (63 aa).

Positions M1–C22 are cleaved as a signal peptide. Residues E23–E44 constitute a propeptide, removed in mature form. A disulfide bridge links C57 with C63.

The protein belongs to the frog skin active peptide (FSAP) family. Brevinin subfamily. In terms of tissue distribution, expressed by the skin glands.

It localises to the secreted. In terms of biological role, antimicrobial peptide. Active against some Gram-negative and a variety of Gram-positive bacterial strains. Active against fungus C.glabrata 090902 but not against C.neoformans 201211. Shows hemolytic activity against human erythrocytes. The polypeptide is Jingdongin-1-MT1 (Amolops mantzorum (Sichuan torrent frog)).